The primary structure comprises 242 residues: Putative prolyl 4-hydroxylase (242 aa).

The Fe2OG dioxygenase domain occupies 128 to 238 (NAEDLQVVRY…KWIANLWFRE (111 aa)).

The protein belongs to the P4HA family. Requires Fe cation as cofactor. The cofactor is L-ascorbate.

It is found in the virion. The catalysed reaction is L-prolyl-[collagen] + 2-oxoglutarate + O2 = trans-4-hydroxy-L-prolyl-[collagen] + succinate + CO2. May catalyze the post-translational formation of 4-hydroxyproline in -Xaa-Pro-Gly- sequences in the 6 collagen-like proteins of Mimivirus. This is Putative prolyl 4-hydroxylase from Acanthamoeba polyphaga mimivirus (APMV).